The chain runs to 474 residues: Neuronal acetylcholine receptor subunit eat-2 (474 aa).

The N-terminal stretch at Met1–Ser21 is a signal peptide. Topologically, residues Ser22 to Tyr237 are extracellular. The N-linked (GlcNAc...) asparagine glycan is linked to Asn95. Cys149 and Cys163 form a disulfide bridge. 3 helical membrane-spanning segments follow: residues Gly238–Met258, Ile266–Val286, and Leu303–Phe323. The Cytoplasmic segment spans residues Arg324 to Arg440. The interval Pro359 to Leu378 is disordered. Residues Leu441 to Cys461 form a helical membrane-spanning segment.

It belongs to the ligand-gated ion channel (TC 1.A.9) family. Acetylcholine receptor (TC 1.A.9.1) subfamily. Neuronal AChR seems to be composed of two different type of subunits: alpha and beta. As to expression, expressed in pharyngeal muscle.

It localises to the postsynaptic cell membrane. Its subcellular location is the cell membrane. Functionally, after binding acetylcholine, the AChR responds by an extensive change in conformation that affects all subunits and leads to opening of an ion-conducting channel across the plasma membrane. Nicotinic acetylcholine receptor in the MC pharyngeal motor neuron involved in pharyngeal pumping. Has a role in the determination of life span possibly via calorific restriction which affects growth rate, although this is independent of metabolic activity. Plays a role in the defense against the accumulation of ingested live pathogenic bacteria in the intestine. The chain is Neuronal acetylcholine receptor subunit eat-2 from Caenorhabditis elegans.